Consider the following 92-residue polypeptide: Antifungal protein B (92 aa).

Residues 1–18 (MHITSIAIVFFAAMGAVA) form the signal peptide. Residues 19–34 (SPIATESDDLDARDVQ) constitute a propeptide that is removed on maturation. 3 cysteine pairs are disulfide-bonded: C42–C70, C49–C77, and C62–C88.

Belongs to the antifungal protein pafB family.

Its subcellular location is the secreted. The protein resides in the host cytoplasm. In terms of biological role, antifungal protein that acts as an inhibitor of growth of human pathogenic molds and yeasts. The sequence is that of Antifungal protein B from Penicillium rubens (strain ATCC 28089 / DSM 1075 / NRRL 1951 / Wisconsin 54-1255) (Penicillium chrysogenum).